Consider the following 816-residue polypeptide: MKIKIGNILKNVVILVIFSLFISKINSEVVKPNPAKPDELVIAFMSPYFDPEYTQYSGAAEYALSKFNETFKTKYSKTIKLHTFTDTNDVIDSLDLVTMPVNGIVGPAYSGSSSTACLVFGAFAVPSISFYATGASLSNSGSYPYFQRVMPDDRLQVQAILSLLKKNGWTRVSCIHTNEDYGNGGADQLVQQSNAQGITVNTNQAIDPVDNGIAPEQLYYDIVFDNLEAAKSRVIVLYALFPPDCLEIWKQAKARGFLGEGFTWIVTDGCAELTGGTDPDLLGVLATFPSYGLGTEAYTDFERTIVNDYNNNTGDAFYKGASFSYDATYAMLMGIEAVLAKGGDPWDGEQVRTELRNLKFNGITGTIAFDKNTGDRLYGEFALLNLINSTKGSFDPIGKINPDSGEITLKSDILYSGPTYKVPSDYQVVVFDRTLNIVLGVITGVCVLIVIGIGSVIALQWRKFRYSSPLFCMFIIIGALMGLASVFTLLPTPTTPLCSGFPWLLGLGYVIVFGTLFTKTWRTWRLFSNARKFKIIRITNKFIITLVGGFVLLESIFMIIWTAVDRPIPLAEPIFKAGEAQLQCTSDSEAWWYVFVFYKVFYILFGVFLAFKTRNVVDSLNESKPITLALYNLTFVMVVAIALGFILRDNPIAIIVIQTIAILLGFTVTVSVLFLPKVWMILSGQQHSMDSIGTSMDSMGRSNGNTTEAESTRGYTNKDYNNQSVGRSFSAHATGFKDVAPSNHPQLGIVYTGGDNFPRVGSSQTAASRSEAEINVSKDVLAKANKKNEEEFGEFFLKPSEDNILKKKKKKKNNNK.

A signal peptide spans Met1 to Ser27. Over Glu28–Asn436 the chain is Extracellular. Residues Asn68, Asn311, and Asn388 are each glycosylated (N-linked (GlcNAc...) asparagine). Residues Ile437–Ile457 form a helical membrane-spanning segment. The Cytoplasmic portion of the chain corresponds to Ala458–Pro469. The helical transmembrane segment at Leu470–Leu490 threads the bilayer. The Extracellular segment spans residues Pro491–Pro496. A helical transmembrane segment spans residues Leu497–Phe517. Residues Thr518–Lys541 lie on the Cytoplasmic side of the membrane. The helical transmembrane segment at Phe542 to Thr562 threads the bilayer. The Extracellular segment spans residues Ala563–Ala590. A helical membrane pass occupies residues Trp591–Phe611. Residues Lys612–Pro625 lie on the Cytoplasmic side of the membrane. A helical transmembrane segment spans residues Ile626–Ile646. Over Leu647 to Ala653 the chain is Extracellular. Residues Ile654–Phe674 form a helical membrane-spanning segment. The Cytoplasmic segment spans residues Leu675–Lys816. The disordered stretch occupies residues Asp697–Lys718.

Belongs to the G-protein coupled receptor 3 family.

The protein resides in the membrane. May be involved in early development in cAMP sensing and subsequent chemotactic response. Probable receptor of GABA and glutamate, leading respectively to the induction or inhibition of SDF-2 formation. This chain is Metabotropic glutamate receptor-like protein E (grlE), found in Dictyostelium discoideum (Social amoeba).